We begin with the raw amino-acid sequence, 559 residues long: uncharacterized protein (559 aa).

The span at 1–10 (MSGRRGDHPG) shows a compositional bias: basic and acidic residues. The disordered stretch occupies residues 1-76 (MSGRRGDHPG…ERSRVPPRTT (76 aa)). A run of 11 helical transmembrane segments spans residues 128–148 (FAVD…AAAS), 155–175 (VALY…LIGP), 186–206 (VALA…IMNY), 208–228 (GATG…MMVF), 259–279 (VFGL…VEFV), 283–303 (LFQL…GASL), 358–378 (LWGN…PAFV), 387–407 (WVQL…NFAG), 428–448 (VLVT…ATAI), 490–510 (LAWV…WVGF), and 515–535 (ALLI…SLIP).

The protein to M.leprae ML2143.

The protein resides in the cell membrane. This is an uncharacterized protein from Mycobacterium tuberculosis (strain CDC 1551 / Oshkosh).